The chain runs to 348 residues: Fructose-1,6-bisphosphatase class 1 (348 aa).

E92, D111, L113, and D114 together coordinate Mg(2+). Residues 114–117 and N204 each bind substrate; that span reads DGSS. E276 contributes to the Mg(2+) binding site.

This sequence belongs to the FBPase class 1 family. As to quaternary structure, homotetramer. Mg(2+) is required as a cofactor.

The protein resides in the cytoplasm. It carries out the reaction beta-D-fructose 1,6-bisphosphate + H2O = beta-D-fructose 6-phosphate + phosphate. It participates in carbohydrate biosynthesis; gluconeogenesis. In Methylorubrum extorquens (strain PA1) (Methylobacterium extorquens), this protein is Fructose-1,6-bisphosphatase class 1.